We begin with the raw amino-acid sequence, 854 residues long: Arsenate respiratory reductase molybdopterin-containing subunit ArrA (854 aa).

The segment at residues 1-41 is a signal peptide (tat-type signal); it reads MKKENQVNLGRRQLLKSTAAGTVLTGIGGTLSFTPIVEGIA. A 4Fe-4S Mo/W bis-MGD-type domain is found at 54 to 110; the sequence is GEWLATTCQGCTSWCAKQIYVMDGRALKVRGNPNSGVHGMSSCPRQHLSLQQVYDPD. [4Fe-4S] cluster contacts are provided by C61, C64, C68, and C96. R165 lines the arsenite pocket. Residue Y166 coordinates arsenate. Residue H189 participates in arsenite binding. S190 contributes to the arsenate binding site. C193 serves as a coordination point for Mo-bis(molybdopterin guanine dinucleotide). K198 is an arsenate binding site. Position 210 (Y210) interacts with arsenite.

It belongs to the prokaryotic molybdopterin-containing oxidoreductase family. As to quaternary structure, heterodimer composed of one large subunit (ArrA) and one small subunit (ArrB). [4Fe-4S] cluster serves as cofactor. Requires Mo-bis(molybdopterin guanine dinucleotide) as cofactor. In terms of processing, predicted to be exported by the Tat system. The position of the signal peptide cleavage has not been experimentally proven.

The protein resides in the periplasm. The enzyme catalyses arsenite + A + H2O = arsenate + AH2 + H(+). With respect to regulation, phosphate is a competitive inhibitor. In terms of biological role, component of the arsenate respiratory reductase (Arr) complex, which catalyzes the reduction of arsenate (As(V)) to arsenite (As(III)). ArrA is the arsenate-binding subunit. The periplasmic localization of this complex may allow the cell to couple arsenate reduction to energy production before arsenate can be transported to the cell cytoplasm and enter the ars detoxification pathway, an energy-requiring process. The chain is Arsenate respiratory reductase molybdopterin-containing subunit ArrA from Shewanella sp. (strain ANA-3).